Consider the following 301-residue polypeptide: NAD kinase 2 (301 aa).

The Proton acceptor role is filled by Asp77. NAD(+) contacts are provided by residues 77-78, Arg82, 151-152, Arg162, Asp181, and 192-197; these read DG, NE, and TAYAFS.

It belongs to the NAD kinase family. Requires a divalent metal cation as cofactor.

It is found in the cytoplasm. The enzyme catalyses NAD(+) + ATP = ADP + NADP(+) + H(+). Involved in the regulation of the intracellular balance of NAD and NADP, and is a key enzyme in the biosynthesis of NADP. Catalyzes specifically the phosphorylation on 2'-hydroxyl of the adenosine moiety of NAD to yield NADP. This chain is NAD kinase 2, found in Streptomyces avermitilis (strain ATCC 31267 / DSM 46492 / JCM 5070 / NBRC 14893 / NCIMB 12804 / NRRL 8165 / MA-4680).